Here is a 279-residue protein sequence, read N- to C-terminus: 3-methyl-2-oxobutanoate hydroxymethyltransferase (279 aa).

Residues D43 and D82 each coordinate Mg(2+). 3-methyl-2-oxobutanoate-binding positions include 43–44 (DS), D82, and K112. Residue E114 participates in Mg(2+) binding. The active-site Proton acceptor is E181.

This sequence belongs to the PanB family. In terms of assembly, homodecamer; pentamer of dimers. Mg(2+) is required as a cofactor.

Its subcellular location is the cytoplasm. The enzyme catalyses 3-methyl-2-oxobutanoate + (6R)-5,10-methylene-5,6,7,8-tetrahydrofolate + H2O = 2-dehydropantoate + (6S)-5,6,7,8-tetrahydrofolate. It participates in cofactor biosynthesis; (R)-pantothenate biosynthesis; (R)-pantoate from 3-methyl-2-oxobutanoate: step 1/2. Functionally, catalyzes the reversible reaction in which hydroxymethyl group from 5,10-methylenetetrahydrofolate is transferred onto alpha-ketoisovalerate to form ketopantoate. In Shouchella clausii (strain KSM-K16) (Alkalihalobacillus clausii), this protein is 3-methyl-2-oxobutanoate hydroxymethyltransferase.